Consider the following 271-residue polypeptide: Metal-staphylopine import system ATP-binding protein CntD (271 aa).

The 246-residue stretch at 6 to 251 (VKHLTITDTW…PEHVYTKYLL (246 aa)) folds into the ABC transporter domain. 38–45 (GESGSGKS) contacts ATP.

It belongs to the ABC transporter superfamily. In terms of assembly, the complex is composed of two ATP-binding proteins (CntD and CntF), two transmembrane proteins (CntB and CntC) and a solute-binding protein (CntA).

The protein localises to the cell membrane. Nickel/cobalt import is reduced in the presence of zinc. In terms of biological role, part of the ABC transporter complex CntABCDF (Opp1) involved in the uptake of metal in complex with the metallophore staphylopine (StP). Involved in the import of divalent metals ions such as nickel, cobalt and zinc. Probably responsible for energy coupling to the transport system. Plays a major role in nickel/cobalt import in zinc-depleted conditions. Contributes to virulence. Required for full urease activity in vitro. This Staphylococcus aureus (strain NCTC 8325 / PS 47) protein is Metal-staphylopine import system ATP-binding protein CntD.